Reading from the N-terminus, the 639-residue chain is Protein sly1 homolog (639 aa).

4 repeat units span residues 85–121, 203–245, 423–460, and 464–500. Residues 85-500 are 4 X approximate repeats; that stretch reads DENLDRIQQD…QATQYEGGGT (416 aa).

Belongs to the STXBP/unc-18/SEC1 family. In terms of tissue distribution, in embryos, from stage 14, expression is seen in posterior midgut, esophagus and salivary glands. No expression is seen in larval imaginal disks.

The protein localises to the cytoplasm. It is found in the membrane. In terms of biological role, non-vital for development. The protein is Protein sly1 homolog (Slh) of Drosophila melanogaster (Fruit fly).